The primary structure comprises 289 residues: Release factor glutamine methyltransferase (289 aa).

Residues 122–126 (GVGSG), aspartate 145, tryptophan 174, and asparagine 189 each bind S-adenosyl-L-methionine. 189-192 (NPPY) contributes to the substrate binding site.

Belongs to the protein N5-glutamine methyltransferase family. PrmC subfamily.

It carries out the reaction L-glutaminyl-[peptide chain release factor] + S-adenosyl-L-methionine = N(5)-methyl-L-glutaminyl-[peptide chain release factor] + S-adenosyl-L-homocysteine + H(+). In terms of biological role, methylates the class 1 translation termination release factors RF1/PrfA and RF2/PrfB on the glutamine residue of the universally conserved GGQ motif. In Caulobacter vibrioides (strain ATCC 19089 / CIP 103742 / CB 15) (Caulobacter crescentus), this protein is Release factor glutamine methyltransferase.